Here is a 258-residue protein sequence, read N- to C-terminus: 3-deoxy-manno-octulosonate cytidylyltransferase (258 aa).

It belongs to the KdsB family.

The protein resides in the cytoplasm. It catalyses the reaction 3-deoxy-alpha-D-manno-oct-2-ulosonate + CTP = CMP-3-deoxy-beta-D-manno-octulosonate + diphosphate. The protein operates within nucleotide-sugar biosynthesis; CMP-3-deoxy-D-manno-octulosonate biosynthesis; CMP-3-deoxy-D-manno-octulosonate from 3-deoxy-D-manno-octulosonate and CTP: step 1/1. It participates in bacterial outer membrane biogenesis; lipopolysaccharide biosynthesis. Its function is as follows. Activates KDO (a required 8-carbon sugar) for incorporation into bacterial lipopolysaccharide in Gram-negative bacteria. In Blochmanniella floridana, this protein is 3-deoxy-manno-octulosonate cytidylyltransferase.